We begin with the raw amino-acid sequence, 85 residues long: U4-theraphotoxin-Hhn1ab (85 aa).

The signal sequence occupies residues 1–22 (MKVTLIAILTCAAVLVLHTTAA). Positions 23-48 (EELEAESQLMEVGMPDTELAAVDEER) are excised as a propeptide. Intrachain disulfides connect Cys56–Cys77 and Cys71–Cys82.

It belongs to the neurotoxin 12 (Hwtx-2) family. 02 (Hwtx-2) subfamily. In terms of tissue distribution, expressed by the venom gland.

It localises to the secreted. Its function is as follows. Postsynaptic neurotoxin. The polypeptide is U4-theraphotoxin-Hhn1ab (Cyriopagopus hainanus (Chinese bird spider)).